The primary structure comprises 496 residues: Galactose/methyl galactoside import ATP-binding protein MglA (496 aa).

ABC transporter domains lie at 5 to 240 and 243 to 496; these read LTIR…VGRT and KRFP…ARYL. 37–44 serves as a coordination point for ATP; it reads GENGAGKS.

Belongs to the ABC transporter superfamily. Galactose/methyl galactoside importer (TC 3.A.1.2.3) family. The complex is composed of one ATP-binding protein (MglA), two transmembrane proteins (MglC) and a solute-binding protein (MglB).

It localises to the cell inner membrane. It catalyses the reaction D-galactose(out) + ATP + H2O = D-galactose(in) + ADP + phosphate + H(+). It carries out the reaction methyl beta-D-galactoside(out) + ATP + H2O = methyl beta-D-galactoside(in) + ADP + phosphate + H(+). In terms of biological role, part of the ABC transporter complex MglABC involved in galactose/methyl galactoside import. Responsible for energy coupling to the transport system. In Treponema pallidum (strain Nichols), this protein is Galactose/methyl galactoside import ATP-binding protein MglA.